A 571-amino-acid chain; its full sequence is Proline--tRNA ligase (571 aa).

This sequence belongs to the class-II aminoacyl-tRNA synthetase family. ProS type 1 subfamily. In terms of assembly, homodimer.

The protein localises to the cytoplasm. The catalysed reaction is tRNA(Pro) + L-proline + ATP = L-prolyl-tRNA(Pro) + AMP + diphosphate. In terms of biological role, catalyzes the attachment of proline to tRNA(Pro) in a two-step reaction: proline is first activated by ATP to form Pro-AMP and then transferred to the acceptor end of tRNA(Pro). As ProRS can inadvertently accommodate and process non-cognate amino acids such as alanine and cysteine, to avoid such errors it has two additional distinct editing activities against alanine. One activity is designated as 'pretransfer' editing and involves the tRNA(Pro)-independent hydrolysis of activated Ala-AMP. The other activity is designated 'posttransfer' editing and involves deacylation of mischarged Ala-tRNA(Pro). The misacylated Cys-tRNA(Pro) is not edited by ProRS. This chain is Proline--tRNA ligase, found in Thermodesulfovibrio yellowstonii (strain ATCC 51303 / DSM 11347 / YP87).